Consider the following 150-residue polypeptide: MFEFNLTVPAGATHKKKIVGRGSSSGWGKTSGKGHKGQQARSGGKVYAGFEGGQMPLYRRVAKKGFSNYPFKKEFYVVNLAMLETKYSDGETVNKESLMQKGLLRKGSLYVKVLGTGDITKKLTVDVDRISASAKEKIEKAGGTIVQSEA.

The tract at residues 18 to 43 (IVGRGSSSGWGKTSGKGHKGQQARSG) is disordered.

It belongs to the universal ribosomal protein uL15 family. In terms of assembly, part of the 50S ribosomal subunit.

Its function is as follows. Binds to the 23S rRNA. The polypeptide is Large ribosomal subunit protein uL15 (Treponema denticola (strain ATCC 35405 / DSM 14222 / CIP 103919 / JCM 8153 / KCTC 15104)).